The following is a 295-amino-acid chain: Forkhead box protein N5 (295 aa).

Residues 119–146 are disordered; it reads STVEDSEDEAPTSCSDLMTDDDNDDSYN. A DNA-binding region (fork-head) is located at residues 178 to 275; it reads RPPLNYCNLI…NEMHALSDDL (98 aa).

In terms of tissue distribution, ubiquitously expressed in early cleavage stage and gastrula stage embryos.

It localises to the nucleus. This is Forkhead box protein N5 from Xenopus laevis (African clawed frog).